A 177-amino-acid polypeptide reads, in one-letter code: Large ribosomal subunit protein uL6 (177 aa).

It belongs to the universal ribosomal protein uL6 family. As to quaternary structure, part of the 50S ribosomal subunit.

In terms of biological role, this protein binds to the 23S rRNA, and is important in its secondary structure. It is located near the subunit interface in the base of the L7/L12 stalk, and near the tRNA binding site of the peptidyltransferase center. This chain is Large ribosomal subunit protein uL6, found in Pectobacterium atrosepticum (strain SCRI 1043 / ATCC BAA-672) (Erwinia carotovora subsp. atroseptica).